Consider the following 142-residue polypeptide: Small ribosomal subunit protein uS12 (142 aa).

This sequence belongs to the universal ribosomal protein uS12 family. Part of the 30S ribosomal subunit.

Functionally, with S4 and S5 plays an important role in translational accuracy. Located at the interface of the 30S and 50S subunits. The polypeptide is Small ribosomal subunit protein uS12 (Methanococcoides burtonii (strain DSM 6242 / NBRC 107633 / OCM 468 / ACE-M)).